The sequence spans 82 residues: Cytochrome b559 subunit alpha (82 aa).

Residues 22 to 36 form a helical membrane-spanning segment; sequence VIHAITLPSIFLAGF. His24 provides a ligand contact to heme.

The protein belongs to the PsbE/PsbF family. Heterodimer of an alpha subunit and a beta subunit. PSII is composed of 1 copy each of membrane proteins PsbA, PsbB, PsbC, PsbD, PsbE, PsbF, PsbH, PsbI, PsbJ, PsbK, PsbL, PsbM, PsbT, PsbX, PsbY, PsbZ, Psb30/Ycf12, peripheral proteins PsbO, CyanoQ (PsbQ), PsbU, PsbV and a large number of cofactors. It forms dimeric complexes. Heme b serves as cofactor.

The protein localises to the cellular thylakoid membrane. This b-type cytochrome is tightly associated with the reaction center of photosystem II (PSII). PSII is a light-driven water:plastoquinone oxidoreductase that uses light energy to abstract electrons from H(2)O, generating O(2) and a proton gradient subsequently used for ATP formation. It consists of a core antenna complex that captures photons, and an electron transfer chain that converts photonic excitation into a charge separation. This is Cytochrome b559 subunit alpha from Synechococcus sp. (strain CC9311).